The chain runs to 76 residues: Theta defensin subunit A (76 aa).

The first 22 residues, 1 to 22 (MRTFALLTAMLLLVALHAQAEA), serve as a signal peptide directing secretion. The propeptide occupies 23–64 (RQARADEAAAQQQPGADDQGMAHSFTWPENAALPLSESAKGL). The interval 25–45 (ARADEAAAQQQPGADDQGMAH) is disordered. Positions 30 to 44 (AAAQQQPGADDQGMA) are enriched in low complexity. A Cyclopeptide (Arg-Cys) (interchain with C-73 in subunit A); in form BTD-3 cross-link involves residue Arg65. Arg65 participates in a covalent cross-link: Cyclopeptide (Arg-Cys) (interchain with C-73 in subunit B); in form BTD-1. Arg65 is covalently cross-linked (Cyclopeptide (Arg-Cys) (interchain with C-73 in subunit C); in form BTD-4). Arg65 participates in a covalent cross-link: Cyclopeptide (Arg-Cys) (interchain with C-73 in subunit D); in form BTD-7. Cys68 and Cys73 are joined by a disulfide. Cys73 participates in a covalent cross-link: Cyclopeptide (Cys-Arg) (interchain with R-65 in subunit A); in form BTD-3. A Cyclopeptide (Cys-Arg) (interchain with R-65 in subunit B); in form BTD-1 cross-link involves residue Cys73. Cys73 participates in a covalent cross-link: Cyclopeptide (Cys-Arg) (interchain with R-65 in subunit C); in form BTD-4. A Cyclopeptide (Cys-Arg) (interchain with R-65 in subunit D); in form BTD-7 cross-link involves residue Cys73. The propeptide occupies 74–76 (RLL).

This sequence belongs to the alpha-defensin family. Theta subfamily. In terms of assembly, BTD-1 is a cyclic heterodimer composed of subunits A and B; disulfide-linked. BTD-3 is a cyclic homodimer composed of two subunits A; disulfide-linked. BTD-4 is a cyclic heterodimer composed of subunits A and C; disulfide-linked. BTD-7 is a cyclic heterodimer composed of subunits A and D; disulfide-linked. Forms a cyclic peptide with subunit B (BTD-1), subunit A (BTD-3), subunit C (BTD-4), or subunit D (BTD-7). An additional intersubunit disulfide bond is formed.

In terms of biological role, BTD-1, BTD-3, BTD-4 and BTD-7 have antimicrobial activity against the Gram-negative bacterium E.coli ML35, the Gram-positive bacterium S.aureus 502a, and the fungus C.albicans 16820. BTD-3 is more effective against E.coli than BTD-1, BTD-4 and BTD-7. This is Theta defensin subunit A (BTDA) from Papio anubis (Olive baboon).